The sequence spans 319 residues: Malate dehydrogenase (319 aa).

NAD(+) contacts are provided by residues 10 to 15 (GSGNIG) and Asp-34. Residues Arg-83 and Arg-89 each contribute to the substrate site. NAD(+) contacts are provided by residues Asn-96 and 119-121 (ITN). 2 residues coordinate substrate: Asn-121 and Arg-152. His-176 functions as the Proton acceptor in the catalytic mechanism.

Belongs to the LDH/MDH superfamily. MDH type 3 family.

It carries out the reaction (S)-malate + NAD(+) = oxaloacetate + NADH + H(+). Functionally, catalyzes the reversible oxidation of malate to oxaloacetate. This chain is Malate dehydrogenase, found in Paramagnetospirillum magneticum (strain ATCC 700264 / AMB-1) (Magnetospirillum magneticum).